Here is a 424-residue protein sequence, read N- to C-terminus: Probable aminotransferase TAT4 (424 aa).

Belongs to the class-I pyridoxal-phosphate-dependent aminotransferase family. It depends on pyridoxal 5'-phosphate as a cofactor.

In Arabidopsis thaliana (Mouse-ear cress), this protein is Probable aminotransferase TAT4.